The chain runs to 502 residues: MAGGTPGGEPTVGSGEPRLKSLATPETIKTGCIAWVEKEGQPRRAEILSIKTTKSGKQFYCNFDNFNKRLDEWVPVIRLDFTREVEWPNPEKEKPKDPKAKKAPTVQSKKTQPSKKSQKRPSKREQSTTSEANTPHPWTDFVENQNRQKSASIGPDGDSQARASVDGGETPGGGDEMEVDERETEVKREPAEFSREVEIEKLRTSGSMTQNPTEVSRIRNISKVQFGRFDLYPWYFSPYPEIFSQEDVIFICEFCLSYYGDLKAFTRHRKKCTLQHPPGNELYRNEEISFFEIDGRRQRTWCRNLCLLSKMFLDHKTLYYDVDPFLFYVMTVRTEKGCHMVGYFSKEKESADGYNVACILTMPQYQRKGYGRLLIQFSYELSRIEGKLGSPEKPLSDLGLLSYRQYWSENILEFLMGYNERDEKVTIEAISTALAMTTQDVEHTLQALRMQVYHKSDHKIVIPEKLIEQREKTKLKRKRTVDPTKIQWKPPVFTASSRTWGW.

A disordered region spans residues 1–24; sequence MAGGTPGGEPTVGSGEPRLKSLAT. Residues 28–80 form the Tudor-knot domain; that stretch reads IKTGCIAWVEKEGQPRRAEILSIKTTKSGKQFYCNFDNFNKRLDEWVPVIRLD. Basic and acidic residues predominate over residues 88–100; that stretch reads PNPEKEKPKDPKA. The disordered stretch occupies residues 88-194; the sequence is PNPEKEKPKD…EVKREPAEFS (107 aa). Residues 112–122 show a composition bias toward basic residues; the sequence is QPSKKSQKRPS. Polar residues predominate over residues 142–151; the sequence is VENQNRQKSA. Over residues 184–194 the composition is skewed to basic and acidic residues; it reads TEVKREPAEFS. The MYST-type HAT domain maps to 216–490; that stretch reads SRIRNISKVQ…VDPTKIQWKP (275 aa). Residues 249-274 form a C2HC MYST-type zinc finger; the sequence is IFICEFCLSYYGDLKAFTRHRKKCTL. Residues 299–320 carry the ESA1-RPD3 motif motif; that stretch reads RTWCRNLCLLSKMFLDHKTLYY. K316 carries the post-translational modification N6-acetyllysine; by autocatalysis. Acetyl-CoA-binding positions include 357–361 and 366–372; these read ACILT and QRKGYGR. The active-site Proton donor/acceptor is E392. Acetyl-CoA is bound at residue S396.

This sequence belongs to the MYST (SAS/MOZ) family. Component of the NuA4 histone acetyltransferase complex. Post-translationally, autoacetylation at Lys-316 is required for proper function.

The protein localises to the nucleus. It localises to the chromosome. The catalysed reaction is L-lysyl-[histone] + acetyl-CoA = N(6)-acetyl-L-lysyl-[histone] + CoA + H(+). It carries out the reaction L-lysyl-[protein] + acetyl-CoA = N(6)-acetyl-L-lysyl-[protein] + CoA + H(+). The enzyme catalyses 2-hydroxyisobutanoyl-CoA + L-lysyl-[protein] = N(6)-(2-hydroxyisobutanoyl)-L-lysyl-[protein] + CoA + H(+). It catalyses the reaction (2E)-butenoyl-CoA + L-lysyl-[protein] = N(6)-(2E)-butenoyl-L-lysyl-[protein] + CoA + H(+). Functionally, catalytic component of the NuA4 histone acetyltransferase (HAT) complex which is involved in epigenetic transcriptional activation of selected genes principally by acetylation of nucleosomal histones H4, H3, H2B, H2A and H2A variant H2A.Z. Acetylates histone H4 to form H4K5ac, H4K8ac, H4K12ac and H4K16ac, histone H3 to form H3K14ac, and histone H2A to form H2AK4ac and H2AK7ac. The NuA4 complex is involved in the DNA damage response and is required for chromosome segregation. The NuA4 complex plays a direct role in repair of DNA double-strand breaks (DSBs) through homologous recombination. Recruitment to promoters depends on H3K4me. Also acetylates non-histone proteins. In addition to protein acetyltransferase, can use different acyl-CoA substrates, such as 2-hydroxyisobutanoyl-CoA (2-hydroxyisobutyryl-CoA) or (2E)-butenoyl-CoA (crotonyl-CoA), and is able to mediate protein 2-hydroxyisobutyrylation and crotonylation, respectively. The polypeptide is Histone acetyltransferase ESA1 (ESA1) (Gibberella zeae (strain ATCC MYA-4620 / CBS 123657 / FGSC 9075 / NRRL 31084 / PH-1) (Wheat head blight fungus)).